We begin with the raw amino-acid sequence, 428 residues long: RF4 protein (428 aa).

N-linked (GlcNAc...) asparagine glycosylation is found at Asn8, Asn205, and Asn344.

Functionally, not known. This chain is RF4 protein (RF4), found in Kluyveromyces lactis (strain ATCC 8585 / CBS 2359 / DSM 70799 / NBRC 1267 / NRRL Y-1140 / WM37) (Yeast).